We begin with the raw amino-acid sequence, 156 residues long: Hexachlorocyclohexane dehydrochlorinase 2 (156 aa).

Asp25 is a catalytic residue. His73 serves as the catalytic Proton acceptor.

This sequence belongs to the HCH dehydrochlorinase family. Homotrimer.

Its subcellular location is the periplasm. The catalysed reaction is gamma-hexachlorocyclohexane = (3R,4S,5S,6R)-pentachlorocyclohexene + chloride + H(+). The enzyme catalyses (3R,4S,5S,6R)-pentachlorocyclohexene = (3R,6R)-1,3,4,6-tetrachlorocyclohexa-1,4-diene + chloride + H(+). It participates in xenobiotic degradation; hexachlorocyclohexane degradation. Functionally, catalyzes the conversion of the important environmental pollutant gamma-hexachlorocyclohexane (gamma-HCH or lindane) to 1,3,4,6-tetrachloro-1,4-cyclohexadiene (1,4-TCDN) via gamma-pentachlorocyclohexene (gamma-PCCH). Proceeds by two successive 1,2-anti conformationally dependent dehydrochlorinations. Also shows activity with alpha- and delta-HCH, giving alpha- and delta-PCCH respectively, but not with the beta isomer. The chain is Hexachlorocyclohexane dehydrochlorinase 2 from Sphingobium indicum (strain DSM 16412 / CCM 7286 / MTCC 6364 / B90A).